We begin with the raw amino-acid sequence, 211 residues long: MSGTGLFLTFEGIDGSGKSTQARLLAETLRAAGHDVVLTREPGGSPGAEEIRRLVLEGDPDRWSAETEILLFTAARRDHLERTIEPALAAGRVVICDRFADSTRMYQGLSRGDLRQLVDQLHALMIGREPDLTLLVDMDPETGLSRAKGRQGSEERFEDFGPELQQRMRAGFLDLAREYAHRFRIIDGNRDMDSVAADVTEIVLTHLNRTR.

Residue Gly-12–Ser-19 participates in ATP binding.

The protein belongs to the thymidylate kinase family.

The catalysed reaction is dTMP + ATP = dTDP + ADP. Its function is as follows. Phosphorylation of dTMP to form dTDP in both de novo and salvage pathways of dTTP synthesis. The protein is Thymidylate kinase of Ruegeria pomeroyi (strain ATCC 700808 / DSM 15171 / DSS-3) (Silicibacter pomeroyi).